We begin with the raw amino-acid sequence, 473 residues long: MPSSLKLLSNLIAESVDKIEQRCAAQGVPFPELNEVLSFQSEAIRSDTDVAEAIQVIAASAAQLLATAMSPIATLSVVAHQWDVPACLGAANDANVAEILRDAGPKGAHIDDIAKRNGTNAGRLGRVLRLLASHHIFREVSPDVFANNRISSLLDSKKPVEELEKNPQSKYTETSLVNTFVSFGAGEFFKGGAFLSETLRDPVFGHSDEANHSAFNKAFKFDVSFFEWMERPENKDVLSRFSLMMRATTDLLPDAAILNGFDFGSLPDGALVVDVAGGIGSLSMVLAKTFPKLNFVVEDRPQLASDAEPYWKSNLPEALESGRVRLVAHDMFTPQPDLGSPVDVFVLRGILHDWADSYGIRLLSHLRAAAGPQTKLVVIEILLESPCRDPETSTIKGCEPRTVPEPLLANMGAADSVDYSMDMMMMGFGNGQERTLRHYVKILSETGWELKEVIHIDSLHIGPLRPHLIAVPV.

Residues 276 to 277 (AG), Asp299, 330 to 331 (DM), and Arg348 each bind S-adenosyl-L-methionine. His352 (proton acceptor) is an active-site residue.

It belongs to the class I-like SAM-binding methyltransferase superfamily. Cation-independent O-methyltransferase family.

The protein operates within secondary metabolite biosynthesis. Its function is as follows. O-methyltransferase, part of the gene cluster that mediates the biosynthesis of melleolides, a range of antifungal and phytotoxic polyketide derivatives composed of an orsellinic acid (OA) moiety esterified to various sesquiterpene alcohols. The first step in melleolides biosynthesis is performed by the delta(6)-protoilludene synthase PRO1 which catalyzes the cyclization of farnesyl diphosphate to protoilludene. The orsellinic acid synthase armB produces OA by condensing acetyl-CoA with 3 malonyl-CoA units in a three-round chain elongation reaction folowed by a C2-C7 ring closure. ArmB further catalyzes the trans-esterification of OA to the various sesquiterpene alcohols resulting from the hydroxylation of protoilludene. The melleolides cluster also includes 5 cytochrome P450 monooxygenases, 4 NAD(+)-dependent oxidoreductases, one flavin-dependent oxidoreductase, and one O-methyltransferase. The cytochrome P450 monooxygenases may be involved in protoilludene hydroxylation to elaborate melleolides with multiple alcohol groups, such as melleolide D, which carries alcohol functionalities at C-4, C-5, C-10, and C-13. The role of the NAD(+)-dependent enzymes remains unknown. Numerous melleolides, including arnamial, show 5'-O-methylation of the aromatic moiety which may be catalyzed by the methyltransferase encoded in the cluster. The flavin-dependent oxidoreductase might represent the dehydrogenase yielding the aldehyde in position 1 of arnamial and other melleolides. Finally, several halogenase localized outside of the cluster, are able to catalyze the transfer of a single chlorine atom to the melleolide backbone, resulting in a 6'-chloromelleolide product. This Armillaria gallica (Bulbous honey fungus) protein is O-methyltransferase ARMGADRAFT_1088206.